The sequence spans 335 residues: MGKLEDVEAEKKLWESDDAWELRKAFMLAHYDDYPKIQLQCLSQLFINVTLLGCEYSQTLMQKIRTMGAGIAANKDRTKTGSYVKASAAKKRQAVKTSDLEGASDESKKVKMEKSPSPVARESFDERLGKLKASLAMTPHHLTGEQMMKTATNSCLMKWHVNKINQKIEITIDRYVAFRHTFSQYCVDPRDCAINTLIESILSCDAAVHEESYEIRFDGVPVDECYAKSVTRRLAKIKSAVSNGAHTVKGLTTYLDAVNMSMIQNTQKLEGWSQQLDLVTADLLLSSRVLSSTECTKPAMATIANQMSEDVCQLILNDKINVINSMKSHSSLAFQ.

In terms of domain architecture, XRN2-binding (XTBD) spans valine 7–lysine 91. The segment at valine 95–valine 119 is disordered. Residues aspartate 105–lysine 114 show a composition bias toward basic and acidic residues.

In terms of assembly, interacts (via N-terminus) with xrn-2; the interaction is direct.

Its subcellular location is the nucleus. It is found in the nucleolus. It localises to the nucleoplasm. Functionally, plays a role in maintenance of steady-state concentration and turnover of microRNAs (miRNA) by degradation of mature miRNA in complex with the exoribonuclease xrn-2. Stabilizes and enhances the accumulation and activity of the exoribonuclease xrn-2, and thus contributes to miRNA turnover. This Caenorhabditis elegans protein is Partner of xrn-2 protein 1.